We begin with the raw amino-acid sequence, 155 residues long: Protein Smg homolog (155 aa).

Belongs to the Smg family.

The polypeptide is Protein Smg homolog (Methylococcus capsulatus (strain ATCC 33009 / NCIMB 11132 / Bath)).